A 201-amino-acid polypeptide reads, in one-letter code: dCTP deaminase, dUMP-forming (201 aa).

DCTP-binding positions include K101–R106, D119, T127–E129, Q148, Y162, and Q174. The Proton donor/acceptor role is filled by E129.

The protein belongs to the dCTP deaminase family. In terms of assembly, homotrimer.

It catalyses the reaction dCTP + 2 H2O = dUMP + NH4(+) + diphosphate. It participates in pyrimidine metabolism; dUMP biosynthesis; dUMP from dCTP: step 1/1. In terms of biological role, bifunctional enzyme that catalyzes both the deamination of dCTP to dUTP and the hydrolysis of dUTP to dUMP without releasing the toxic dUTP intermediate. The polypeptide is dCTP deaminase, dUMP-forming (Parafrankia sp. (strain EAN1pec)).